An 86-amino-acid polypeptide reads, in one-letter code: Large ribosomal subunit protein bL27c (86 aa).

The tract at residues 1–27 (MAHKKGSGSTRNGRDSNSKRLGVKKYG) is disordered.

It belongs to the bacterial ribosomal protein bL27 family.

The protein resides in the plastid. It is found in the chloroplast. This Porphyra purpurea (Red seaweed) protein is Large ribosomal subunit protein bL27c (rpl27).